The following is a 164-amino-acid chain: Large ribosomal subunit protein bL9 (164 aa).

It belongs to the bacterial ribosomal protein bL9 family.

Functionally, binds to the 23S rRNA. This is Large ribosomal subunit protein bL9 from Borrelia recurrentis (strain A1).